Consider the following 527-residue polypeptide: GMP synthase [glutamine-hydrolyzing] (527 aa).

The region spanning 11-209 (RILILDFGSQ…VLNICGCENL (199 aa)) is the Glutamine amidotransferase type-1 domain. Cys88 acts as the Nucleophile in catalysis. Catalysis depends on residues His183 and Glu185. In terms of domain architecture, GMPS ATP-PPase spans 210-402 (WTSANIIEDA…LGLPYNMLYR (193 aa)). 237–243 (SGGVDSS) is a binding site for ATP.

As to quaternary structure, homodimer.

The enzyme catalyses XMP + L-glutamine + ATP + H2O = GMP + L-glutamate + AMP + diphosphate + 2 H(+). It participates in purine metabolism; GMP biosynthesis; GMP from XMP (L-Gln route): step 1/1. Catalyzes the synthesis of GMP from XMP. In Photobacterium profundum (strain SS9), this protein is GMP synthase [glutamine-hydrolyzing].